Reading from the N-terminus, the 355-residue chain is N-acylethanolamine-hydrolyzing acid amidase (355 aa).

The N-terminal stretch at 1 to 17 is a signal peptide; sequence MLLLQIILLLLPVICSA. Cysteine 122 functions as the Nucleophile in the catalytic mechanism. N-linked (GlcNAc...) asparagine glycans are attached at residues asparagine 150, asparagine 160, and asparagine 328.

This sequence belongs to the acid ceramidase family. In terms of assembly, heterodimer of an alpha and a beta subunit, produced by autocatalytic cleavage. N-glycosylated. Post-translationally, autoproteolytic cleavage at pH 4.5 gives rise to the alpha and beta subunit. Cleavage gives rise to a conformation change that activates the enzyme. The same catalytic Cys residue mediates the autoproteolytic cleavage and subsequent hydrolysis of lipid substrates.

The protein resides in the lysosome. It is found in the membrane. The catalysed reaction is N-hexadecanoylethanolamine + H2O = ethanolamine + hexadecanoate. It catalyses the reaction an N-(long-chain fatty acyl)ethanolamine + H2O = a long-chain fatty acid + ethanolamine. The protein operates within lipid metabolism; fatty acid metabolism. Its function is as follows. Degrades bioactive fatty acid amides, such as N-palmitoylethanolamine, to ethanolamine and free fatty acids. In Caenorhabditis elegans, this protein is N-acylethanolamine-hydrolyzing acid amidase.